Here is a 1020-residue protein sequence, read N- to C-terminus: Fanconi-associated nuclease 1 (1020 aa).

The span at 1 to 11 (MPSQRKSPDQK) shows a compositional bias: basic and acidic residues. The interval 1-24 (MPSQRKSPDQKRPRRSLSTSKTAK) is disordered. A D-box motif is present at residues 14 to 22 (RRSLSTSKT). Residues 41-69 (KLACSTCHKMVPRYDLIRHLDESCANNGV) form a UBZ4-type zinc finger. Residues Cys44, Cys47, His59, and Cys64 each coordinate Zn(2+). The disordered stretch occupies residues 173–208 (KNEGLASQCPQTSPSTPGTSLTDNCPEMEDKDEVLN). The span at 180-195 (QCPQTSPSTPGTSLTD) shows a compositional bias: polar residues. Positions 212–214 (KEN) match the KEN box motif. Over residues 224-242 (ENASEQKVKNNKITGDESQ) the composition is skewed to basic and acidic residues. Disordered regions lie at residues 224 to 252 (ENAS…PALT) and 269 to 288 (LVSN…ESAR). The segment covering 269 to 278 (LVSNTKSSPG) has biased composition (polar residues). Residues 673–737 (SSRAVEVLER…AIRCIREGLA (65 aa)) adopt a coiled-coil conformation. Mn(2+) contacts are provided by Glu837, Asp963, Glu978, and Val979. The VRR-NUC domain occupies 898 to 1010 (AESLRAWVGE…GADVEVCHVV (113 aa)).

This sequence belongs to the FAN1 family. In terms of assembly, interacts with FANCD2 (when monoubiquitinated). Interacts with FANCI, MLH1, MLH3 and PMS2. The cofactor is Mn(2+). It depends on Mg(2+) as a cofactor. Post-translationally, ubiquitinated and degraded during mitotic exit by the APC/C-Cdh1 complex.

It localises to the nucleus. It carries out the reaction Hydrolytically removes 5'-nucleotides successively from the 3'-hydroxy termini of 3'-hydroxy-terminated oligonucleotides.. Nuclease required for the repair of DNA interstrand cross-links (ICL) recruited at sites of DNA damage by monoubiquitinated FANCD2. Specifically involved in repair of ICL-induced DNA breaks by being required for efficient homologous recombination, probably in the resolution of homologous recombination intermediates. Not involved in DNA double-strand breaks resection. Acts as a 5'-3' exonuclease that anchors at a cut end of DNA and cleaves DNA successively at every third nucleotide, allowing to excise an ICL from one strand through flanking incisions. Probably keeps excising with 3'-flap annealing until it reaches and unhooks the ICL. Acts at sites that have a 5'-terminal phosphate anchor at a nick or a 1- or 2-nucleotide flap and is augmented by a 3' flap. Also has endonuclease activity toward 5'-flaps. The sequence is that of Fanconi-associated nuclease 1 from Mus musculus (Mouse).